Consider the following 213-residue polypeptide: Serine acetyltransferase (213 aa).

Belongs to the transferase hexapeptide repeat family.

It is found in the cytoplasm. The catalysed reaction is L-serine + acetyl-CoA = O-acetyl-L-serine + CoA. It participates in amino-acid biosynthesis; L-cysteine biosynthesis; L-cysteine from L-serine: step 1/2. This is Serine acetyltransferase (cysE) from Staphylococcus epidermidis (strain ATCC 35984 / DSM 28319 / BCRC 17069 / CCUG 31568 / BM 3577 / RP62A).